The sequence spans 200 residues: 3-isopropylmalate dehydratase small subunit (200 aa).

The protein belongs to the LeuD family. LeuD type 1 subfamily. Heterodimer of LeuC and LeuD.

The enzyme catalyses (2R,3S)-3-isopropylmalate = (2S)-2-isopropylmalate. The protein operates within amino-acid biosynthesis; L-leucine biosynthesis; L-leucine from 3-methyl-2-oxobutanoate: step 2/4. In terms of biological role, catalyzes the isomerization between 2-isopropylmalate and 3-isopropylmalate, via the formation of 2-isopropylmaleate. In Serratia proteamaculans (strain 568), this protein is 3-isopropylmalate dehydratase small subunit.